The sequence spans 179 residues: ATP synthase subunit delta, chloroplastic (179 aa).

It belongs to the ATPase delta chain family. F-type ATPases have 2 components, F(1) - the catalytic core - and F(0) - the membrane proton channel. F(1) has five subunits: alpha(3), beta(3), gamma(1), delta(1), epsilon(1). CF(0) has four main subunits: a(1), b(1), b'(1) and c(10-14). The alpha and beta chains form an alternating ring which encloses part of the gamma chain. F(1) is attached to F(0) by a central stalk formed by the gamma and epsilon chains, while a peripheral stalk is formed by the delta, b and b' chains.

It localises to the plastid. The protein localises to the chloroplast thylakoid membrane. F(1)F(0) ATP synthase produces ATP from ADP in the presence of a proton or sodium gradient. F-type ATPases consist of two structural domains, F(1) containing the extramembraneous catalytic core and F(0) containing the membrane proton channel, linked together by a central stalk and a peripheral stalk. During catalysis, ATP synthesis in the catalytic domain of F(1) is coupled via a rotary mechanism of the central stalk subunits to proton translocation. Its function is as follows. This protein is part of the stalk that links CF(0) to CF(1). It either transmits conformational changes from CF(0) to CF(1) or is implicated in proton conduction. This is ATP synthase subunit delta, chloroplastic from Ochrosphaera neapolitana.